The sequence spans 233 residues: Large ribosomal subunit protein uL1 (233 aa).

It belongs to the universal ribosomal protein uL1 family. In terms of assembly, part of the 50S ribosomal subunit.

In terms of biological role, binds directly to 23S rRNA. The L1 stalk is quite mobile in the ribosome, and is involved in E site tRNA release. Functionally, protein L1 is also a translational repressor protein, it controls the translation of the L11 operon by binding to its mRNA. This is Large ribosomal subunit protein uL1 from Deinococcus geothermalis (strain DSM 11300 / CIP 105573 / AG-3a).